The primary structure comprises 156 residues: 6,7-dimethyl-8-ribityllumazine synthase (156 aa).

5-amino-6-(D-ribitylamino)uracil contacts are provided by residues Phe-23, 57–59, and 81–83; these read AYE and AII. A (2S)-2-hydroxy-3-oxobutyl phosphate-binding site is contributed by 86–87; the sequence is GT. His-89 acts as the Proton donor in catalysis. Phe-114 contacts 5-amino-6-(D-ribitylamino)uracil. Arg-128 serves as a coordination point for (2S)-2-hydroxy-3-oxobutyl phosphate.

Belongs to the DMRL synthase family.

It catalyses the reaction (2S)-2-hydroxy-3-oxobutyl phosphate + 5-amino-6-(D-ribitylamino)uracil = 6,7-dimethyl-8-(1-D-ribityl)lumazine + phosphate + 2 H2O + H(+). The protein operates within cofactor biosynthesis; riboflavin biosynthesis; riboflavin from 2-hydroxy-3-oxobutyl phosphate and 5-amino-6-(D-ribitylamino)uracil: step 1/2. Its function is as follows. Catalyzes the formation of 6,7-dimethyl-8-ribityllumazine by condensation of 5-amino-6-(D-ribitylamino)uracil with 3,4-dihydroxy-2-butanone 4-phosphate. This is the penultimate step in the biosynthesis of riboflavin. The protein is 6,7-dimethyl-8-ribityllumazine synthase of Helicobacter pylori (strain J99 / ATCC 700824) (Campylobacter pylori J99).